Consider the following 326-residue polypeptide: Biotin synthase (326 aa).

The Radical SAM core domain occupies 51 to 278 (NEVQRSTLLS…TSYVRLSAGR (228 aa)). 3 residues coordinate [4Fe-4S] cluster: Cys66, Cys70, and Cys73. Positions 110, 141, 201, and 273 each coordinate [2Fe-2S] cluster.

It belongs to the radical SAM superfamily. Biotin synthase family. Homodimer. It depends on [4Fe-4S] cluster as a cofactor. [2Fe-2S] cluster is required as a cofactor.

It carries out the reaction (4R,5S)-dethiobiotin + (sulfur carrier)-SH + 2 reduced [2Fe-2S]-[ferredoxin] + 2 S-adenosyl-L-methionine = (sulfur carrier)-H + biotin + 2 5'-deoxyadenosine + 2 L-methionine + 2 oxidized [2Fe-2S]-[ferredoxin]. The protein operates within cofactor biosynthesis; biotin biosynthesis; biotin from 7,8-diaminononanoate: step 2/2. Functionally, catalyzes the conversion of dethiobiotin (DTB) to biotin by the insertion of a sulfur atom into dethiobiotin via a radical-based mechanism. This Azoarcus sp. (strain BH72) protein is Biotin synthase.